The following is a 115-amino-acid chain: Phosphoribosyl-AMP cyclohydrolase (115 aa).

D80 provides a ligand contact to Mg(2+). Residue C81 participates in Zn(2+) binding. D82 and D84 together coordinate Mg(2+). Residues C97 and C104 each coordinate Zn(2+).

This sequence belongs to the PRA-CH family. As to quaternary structure, homodimer. The cofactor is Mg(2+). Zn(2+) is required as a cofactor.

Its subcellular location is the cytoplasm. The enzyme catalyses 1-(5-phospho-beta-D-ribosyl)-5'-AMP + H2O = 1-(5-phospho-beta-D-ribosyl)-5-[(5-phospho-beta-D-ribosylamino)methylideneamino]imidazole-4-carboxamide. It participates in amino-acid biosynthesis; L-histidine biosynthesis; L-histidine from 5-phospho-alpha-D-ribose 1-diphosphate: step 3/9. Catalyzes the hydrolysis of the adenine ring of phosphoribosyl-AMP. The protein is Phosphoribosyl-AMP cyclohydrolase of Mycolicibacterium paratuberculosis (strain ATCC BAA-968 / K-10) (Mycobacterium paratuberculosis).